A 701-amino-acid polypeptide reads, in one-letter code: Elongation factor G (701 aa).

Positions 8–290 constitute a tr-type G domain; that stretch reads ARYRNIGISA…AVIEYLPAPT (283 aa). GTP contacts are provided by residues 17-24, 88-92, and 142-145; these read AHIDAGKT, DTPGH, and NKMD.

This sequence belongs to the TRAFAC class translation factor GTPase superfamily. Classic translation factor GTPase family. EF-G/EF-2 subfamily.

The protein resides in the cytoplasm. Functionally, catalyzes the GTP-dependent ribosomal translocation step during translation elongation. During this step, the ribosome changes from the pre-translocational (PRE) to the post-translocational (POST) state as the newly formed A-site-bound peptidyl-tRNA and P-site-bound deacylated tRNA move to the P and E sites, respectively. Catalyzes the coordinated movement of the two tRNA molecules, the mRNA and conformational changes in the ribosome. This chain is Elongation factor G, found in Sodalis glossinidius (strain morsitans).